The following is a 1257-amino-acid chain: LIM domain kinase 1 (1257 aa).

Positions 1–24 (MHHQQRLRANGGRGGTGLGAGSGP) are disordered. The interaction with LATS1 stretch occupies residues 1–147 (MHHQQRLRAN…ERSKLYCGQC (147 aa)). The segment covering 11–24 (GGRGGTGLGAGSGP) has biased composition (gly residues). LIM zinc-binding domains lie at 31 to 93 (PLCA…RFGD) and 94 to 154 (ACQQ…RSCQ). Residues 174-274 (LVEIPKDATP…MLQLTVEHDP (101 aa)) enclose the PDZ domain. The Protein kinase domain occupies 401–686 (LVIGEKLGEG…PCFETLHVWL (286 aa)). ATP is bound by residues 407–415 (LGEGFFGKV) and lysine 430. The active site involves aspartate 522. Disordered regions lie at residues 552–587 (LPSG…RQRR), 759–811 (QDIP…ERAL), and 881–900 (EELL…QHHR). The span at 794 to 811 (QEERRNLTPDTESKERAL) shows a compositional bias: basic and acidic residues. Position 1000 is a phosphoserine (serine 1000). Disordered stretches follow at residues 1010 to 1037 (AKQL…NPPL), 1085 to 1182 (SAQQ…EKVH), and 1212 to 1257 (AAGT…NTRC). Composition is skewed to polar residues over residues 1085 to 1095 (SAQQQRTSSNH) and 1113 to 1125 (RTGS…SNCV). Low complexity-rich tracts occupy residues 1126–1137 (SPTRSSRPGSPT) and 1145–1166 (TAAT…HQQQ).

This sequence belongs to the protein kinase superfamily. TKL Ser/Thr protein kinase family. In terms of assembly, interacts with LATS1, and this interaction inhibits phosphorylation of tsr/cofilin. Phosphorylated on serine and/or threonine residues by ROCK1. Phosphorylated by PAK4 resulting in increased LIMK1 ability to phosphorylate cofilin. May be dephosphorylated and inactivated by SSH1. As to expression, expressed throughout the imaginal disks of the eye, leg and wing.

The protein resides in the cytoplasm. It is found in the cleavage furrow. Its subcellular location is the midbody. It catalyses the reaction L-seryl-[protein] + ATP = O-phospho-L-seryl-[protein] + ADP + H(+). The enzyme catalyses L-threonyl-[protein] + ATP = O-phospho-L-threonyl-[protein] + ADP + H(+). Its function is as follows. Protein kinase which regulates actin filament dynamics. Phosphorylates and inactivates the actin binding/depolymerizing factor tsr/cofilin, thereby stabilizing the actin cytoskeleton. Modulation of actin cytoskeleton dynamics may be essential for imaginal disk morphogenesis and axon guidance. This is LIM domain kinase 1 (LIMK1) from Drosophila melanogaster (Fruit fly).